The sequence spans 505 residues: Maturase K (505 aa).

Belongs to the intron maturase 2 family. MatK subfamily.

Its subcellular location is the plastid. It is found in the chloroplast. Usually encoded in the trnK tRNA gene intron. Probably assists in splicing its own and other chloroplast group II introns. The chain is Maturase K from Micranthes integrifolia (Wholeleaf saxifrage).